We begin with the raw amino-acid sequence, 309 residues long: Elongation factor Ts (309 aa).

The tract at residues 82–85 is involved in Mg(2+) ion dislocation from EF-Tu; that stretch reads TDFV.

The protein belongs to the EF-Ts family.

Its subcellular location is the cytoplasm. Associates with the EF-Tu.GDP complex and induces the exchange of GDP to GTP. It remains bound to the aminoacyl-tRNA.EF-Tu.GTP complex up to the GTP hydrolysis stage on the ribosome. In Rickettsia peacockii (strain Rustic), this protein is Elongation factor Ts.